Reading from the N-terminus, the 246-residue chain is Putative pectinesterase 57 (246 aa).

Residues asparagine 127 and asparagine 143 are each glycosylated (N-linked (GlcNAc...) asparagine). Residue threonine 152 coordinates substrate. An N-linked (GlcNAc...) asparagine glycan is attached at asparagine 174. The Proton donor role is filled by aspartate 205. Aspartate 226 functions as the Nucleophile in the catalytic mechanism.

This sequence belongs to the pectinesterase family.

It carries out the reaction [(1-&gt;4)-alpha-D-galacturonosyl methyl ester](n) + n H2O = [(1-&gt;4)-alpha-D-galacturonosyl](n) + n methanol + n H(+). The protein operates within glycan metabolism; pectin degradation; 2-dehydro-3-deoxy-D-gluconate from pectin: step 1/5. Its function is as follows. Acts in the modification of cell walls via demethylesterification of cell wall pectin. This is Putative pectinesterase 57 (PME57) from Arabidopsis thaliana (Mouse-ear cress).